A 206-amino-acid chain; its full sequence is Small ribosomal subunit protein eS1 (206 aa).

It belongs to the eukaryotic ribosomal protein eS1 family.

The protein is Small ribosomal subunit protein eS1 of Natronomonas pharaonis (strain ATCC 35678 / DSM 2160 / CIP 103997 / JCM 8858 / NBRC 14720 / NCIMB 2260 / Gabara) (Halobacterium pharaonis).